A 121-amino-acid chain; its full sequence is Large ribosomal subunit protein eL18 (121 aa).

The protein belongs to the eukaryotic ribosomal protein eL18 family.

This Methanosphaerula palustris (strain ATCC BAA-1556 / DSM 19958 / E1-9c) protein is Large ribosomal subunit protein eL18.